A 1768-amino-acid polypeptide reads, in one-letter code: Callose synthase 11 (1768 aa).

The Cytoplasmic portion of the chain corresponds to 1–308 (MRRQRPSVAT…WNVYRSFDRL (308 aa)). A helical transmembrane segment spans residues 309–329 (WILLLLYLQAAIIVATSDVKF). At 330–335 (PWQDRD) the chain is on the extracellular side. The chain crosses the membrane as a helical span at residues 336 to 356 (VEVALLTVFISWAGLRLLQSV). Residues 357–370 (LDASTQYSLVSRET) lie on the Cytoplasmic side of the membrane. The chain crosses the membrane as a helical span at residues 371–391 (YWLFIRLTLKFVVAVAWTVLF). The Extracellular portion of the chain corresponds to 392–421 (SVFYARIWSQKNKDGVWSRAANERVVTFLK). Residues 422–442 (VVFVYVIPELLALVLFIVPCI) form a helical membrane-spanning segment. The Cytoplasmic segment spans residues 443–480 (RNWVEELNLGVVYFLTWWFYSKTFVGRGMREGLVDNVK). A helical membrane pass occupies residues 481–501 (YTLFWIIVLATKFIFSYFLQI). The Extracellular portion of the chain corresponds to 502–530 (RPLIAPTRALLNLKDATYNWHEFFGSTHR). The chain crosses the membrane as a helical span at residues 531–551 (IAVGMLWLPVILVYLMDLQIW). Topologically, residues 552-1341 (YSIYSSLVGA…FFRMLSFFYT (790 aa)) are cytoplasmic. Residues 1342 to 1362 (TVGYYFNTMLIVFTVYAFLWG) traverse the membrane as a helical segment. Topologically, residues 1363–1386 (RLYLALSGVEKIAKDRSSSNEALG) are extracellular. A helical membrane pass occupies residues 1387–1407 (AILNQQFIIQLGLFTALPMIL). Residues 1408–1413 (ENSLER) lie on the Cytoplasmic side of the membrane. The chain crosses the membrane as a helical span at residues 1414–1434 (GFLPAVWDFITMQLQLASFFY). Residues 1435 to 1481 (TFSMGTRTHYFGRTILHGGAKYRATGRGFVVEHKKFAENYRLYARTH) lie on the Extracellular side of the membrane. Residues 1482–1502 (FIKAIELAIILLVYAAYSPLA) traverse the membrane as a helical segment. Residues 1503–1508 (KSSFVY) lie on the Cytoplasmic side of the membrane. The helical transmembrane segment at 1509–1529 (ILMTISSWFLITSWIISPFLF) threads the bilayer. Topologically, residues 1530-1583 (NPSGFDWLKTVNDFDDFIAWLWSRGGLFTKADQSWFTWWNEEQEHLKTTGVWGK) are extracellular. The helical transmembrane segment at 1584-1604 (LLEIILDLRFFFFQYSIVYHL) threads the bilayer. Residues 1605–1612 (RIAENRTS) are Cytoplasmic-facing. A helical transmembrane segment spans residues 1613 to 1633 (IGVYLISWGCIIGIVAIYITT). Topologically, residues 1634-1649 (IYAQKRYSVKEHIKYR) are extracellular. The helical transmembrane segment at 1650–1670 (FIQFLVILLTVLVVVMMLQFT) threads the bilayer. Residues 1671–1673 (KLT) are Cytoplasmic-facing. A helical transmembrane segment spans residues 1674–1694 (VVDLLISLLAFVPTGWGLISI). Residues 1695 to 1719 (AQVLKPFLLSTVVWDTVISVARFYD) lie on the Extracellular side of the membrane. The helical transmembrane segment at 1720–1740 (LFFGLIVMAPVALLSWLPGFQ) threads the bilayer. Residues 1741-1768 (NMQTRILFNEAFSRGLQISIILAGKKST) are Cytoplasmic-facing.

This sequence belongs to the glycosyltransferase 48 family. In terms of tissue distribution, ubiquitous.

It localises to the cell membrane. It carries out the reaction [(1-&gt;3)-beta-D-glucosyl](n) + UDP-alpha-D-glucose = [(1-&gt;3)-beta-D-glucosyl](n+1) + UDP + H(+). Its function is as follows. Required the formation of the callose wall separating the tetraspores (interstitial wall), but not for the callose wall surrounding the pollen mother cells (peripheral wall). Functionally redudant to CALS12 (GSL5). During plant growth and development, callose is found as a transitory component of the cell plate in dividing cells, is a major component of pollen mother cell walls and pollen tubes, and is found as a structural component of plasmodesmatal canals. This chain is Callose synthase 11 (CALS11), found in Arabidopsis thaliana (Mouse-ear cress).